Here is a 130-residue protein sequence, read N- to C-terminus: Glycine cleavage system H protein (130 aa).

Residues 24–106 form the Lipoyl-binding domain; it reads EYTVGITEHA…YHEGWLFRIK (83 aa). Position 65 is an N6-lipoyllysine (K65).

This sequence belongs to the GcvH family. In terms of assembly, the glycine cleavage system is composed of four proteins: P, T, L and H. (R)-lipoate is required as a cofactor.

In terms of biological role, the glycine cleavage system catalyzes the degradation of glycine. The H protein shuttles the methylamine group of glycine from the P protein to the T protein. The chain is Glycine cleavage system H protein from Photorhabdus laumondii subsp. laumondii (strain DSM 15139 / CIP 105565 / TT01) (Photorhabdus luminescens subsp. laumondii).